The primary structure comprises 554 residues: Acurin A biosynthesis cluster MFS-type transporter (554 aa).

The next 5 helical transmembrane spans lie at 24-44, 60-80, 96-116, 123-143, and 151-171; these read WLIF…TSII, LYIW…AIVG, LLIF…GMLL, GLGG…MVSL, and GILG…GGGF. N174 is a glycosylation site (N-linked (GlcNAc...) asparagine). 3 helical membrane passes run 179–199, 219–239, and 251–271; these read WIFY…VTLL, WGGI…LTWA, and IVPL…EALP. N-linked (GlcNAc...) asparagine glycosylation occurs at N283. 6 consecutive transmembrane segments (helical) span residues 289–309, 324–344, 352–372, 385–405, 417–437, and 496–516; these read LFVM…FLPI, VMLF…GILM, SFQY…TLLD, ILFG…ILAS, TWIF…AAVF, and VWQV…LVKA.

It belongs to the major facilitator superfamily.

Its subcellular location is the membrane. Functionally, MFS-type transporter that may have a role in the biosynthesis of acurin A, a highly reduced polyketide coupled to a serine via a peptide bond; either in extra- or intracellular transport. The sequence is that of Acurin A biosynthesis cluster MFS-type transporter from Aspergillus aculeatus (strain ATCC 16872 / CBS 172.66 / WB 5094).